Here is a 372-residue protein sequence, read N- to C-terminus: Putative 26S proteasome regulatory subunit homolog MTH_1011 (372 aa).

Residue 164–171 coordinates ATP; sequence GSPGTGKT.

The protein belongs to the AAA ATPase family.

Its function is as follows. The 26S proteasome is involved in the ATP-dependent degradation of ubiquitinated proteins. The regulatory (or ATPase) complex confers ATP dependency and substrate specificity to the 26S complex. This Methanothermobacter thermautotrophicus (strain ATCC 29096 / DSM 1053 / JCM 10044 / NBRC 100330 / Delta H) (Methanobacterium thermoautotrophicum) protein is Putative 26S proteasome regulatory subunit homolog MTH_1011.